The following is a 325-amino-acid chain: Elongation factor Ts, mitochondrial (325 aa).

A mitochondrion-targeting transit peptide spans 1 to 45 (MSLLRSLRVFLVARTGSYPAGSLLRQSPQPRHTFYAGPRLSASAS). 3 positions are modified to N6-succinyllysine: lysine 76, lysine 133, and lysine 192. Residue serine 270 is modified to Phosphoserine. The residue at position 324 (threonine 324) is a Phosphothreonine.

It belongs to the EF-Ts family. Expressed in all tissues, with the highest levels of expression in skeletal muscle, liver and kidney.

The protein resides in the mitochondrion. Its function is as follows. Associates with the EF-Tu.GDP complex and induces the exchange of GDP to GTP. It remains bound to the aminoacyl-tRNA.EF-Tu.GTP complex up to the GTP hydrolysis stage on the ribosome. The polypeptide is Elongation factor Ts, mitochondrial (Homo sapiens (Human)).